A 302-amino-acid polypeptide reads, in one-letter code: Tegument protein VP22 (302 aa).

Residues 1-10 (MASSDGDRLC) show a composition bias toward basic and acidic residues. Disordered stretches follow at residues 1 to 42 (MASS…PDDS) and 125 to 167 (SFTK…TATS). Residues 154–244 (RPISFSTAPK…ANEADLGEGA (91 aa)) are interaction with gE. The segment covering 157-167 (SFSTAPKTATS) has biased composition (polar residues). The short motif at 212–224 (LDRLLTGAVIRIT) is the Nuclear export signal element. The interval 243–302 (GASVSKRGHNRKTGDLQGGMGNEPMYAQVRKPKSRTDTQTTGRITNRSRARSASRTDARK) is disordered.

The protein belongs to the alphaherpesvirinae VP22 tegument protein family. Interacts with gE (via C-terminus); this interaction is necessary for the recruitment of VP22/ORF9 to the Golgi and its packaging into virions. Interacts with gM (via C-terminus). Interacts with VP16/ORF10; this interaction allows the formation of a tripartite complex composed of VP16/ORF10, VP22/ORF9 and VHS/ORF17. Interacts with the capsid-binding protein ORF44. Interacts with host CGAS. Post-translationally, highly phosphorylated in the host cell. Packaging is selective for underphosphorylated forms.

The protein localises to the virion tegument. It is found in the host cytoplasm. The protein resides in the host nucleus. Its subcellular location is the host Golgi apparatus. Functionally, tegument protein that plays different roles during the time course of infection. Participates in both the accumulation of viral mRNAs and viral protein translation at late time of infection. Modulates the RNase activity of the virion host shutoff protein ORF17 probably to ensure necessary levels of key cellular mRNAs and proteins. Plays a role in microtubule reorganization that occurs after viral infection by stabilizing microtubule network. Plays a role in the inhibition of host innate immune system by targeting the CGAS enzymatic activity which is the principal cytosolic DNA sensor that detects invading viral DNA. Acts by mediating disruption of liquid-like droplets in which CGAS is activated, thereby preventing CGAS activity. The chain is Tegument protein VP22 from Varicella-zoster virus (strain Oka vaccine) (HHV-3).